Reading from the N-terminus, the 287-residue chain is ATP synthase gamma chain (287 aa).

Belongs to the ATPase gamma chain family. In terms of assembly, F-type ATPases have 2 components, CF(1) - the catalytic core - and CF(0) - the membrane proton channel. CF(1) has five subunits: alpha(3), beta(3), gamma(1), delta(1), epsilon(1). CF(0) has three main subunits: a, b and c.

The protein localises to the cell inner membrane. In terms of biological role, produces ATP from ADP in the presence of a proton gradient across the membrane. The gamma chain is believed to be important in regulating ATPase activity and the flow of protons through the CF(0) complex. This is ATP synthase gamma chain from Stenotrophomonas maltophilia (strain R551-3).